The following is a 157-amino-acid chain: Neutrophil recruitment protein (157 aa).

The signal sequence occupies residues Met-1–Ala-19.

Belongs to the PBP/GOBP family. In terms of assembly, interacts with mouse TLR1; the interaction promotes activation of canonical NF-kappa-B signaling in host macrophages. Interacts with human TLR1. Interacts with mouse TLR4; the interaction promotes activation of canonical NF-kappa-B signaling in host macrophages. Interacts with human TLR4. In terms of tissue distribution, female salivary gland (at protein level).

The protein localises to the secreted. Functionally, activates MyD88-dependent canonical NF-kappa-B signaling in host macrophages via interaction with host TLR1 and TLR4; this drives the expression of neutrophil chemoattractants, followed by the subsequent influx of neutrophils and recruitment of myeloid cells at the bite site. Its function is as follows. (Microbial infection) Promotes Zika virus infection in mouse model by facilitating recruitment of flavivirus-permissive myeloid cells at the bite site. (Microbial infection) Promotes dengue virus infection in mouse model by facilitating recruitment of flavivirus-permissive myeloid cells at the bite site. The chain is Neutrophil recruitment protein from Aedes aegypti (Yellowfever mosquito).